The chain runs to 400 residues: Chorismate synthase (400 aa).

NADP(+) is bound by residues R40 and R46. Residues 135-137 (RAS), 257-258 (QA), G301, 316-320 (KPIST), and R342 contribute to the FMN site.

It belongs to the chorismate synthase family. In terms of assembly, homotetramer. FMNH2 is required as a cofactor.

The catalysed reaction is 5-O-(1-carboxyvinyl)-3-phosphoshikimate = chorismate + phosphate. It functions in the pathway metabolic intermediate biosynthesis; chorismate biosynthesis; chorismate from D-erythrose 4-phosphate and phosphoenolpyruvate: step 7/7. Its function is as follows. Catalyzes the anti-1,4-elimination of the C-3 phosphate and the C-6 proR hydrogen from 5-enolpyruvylshikimate-3-phosphate (EPSP) to yield chorismate, which is the branch point compound that serves as the starting substrate for the three terminal pathways of aromatic amino acid biosynthesis. This reaction introduces a second double bond into the aromatic ring system. This is Chorismate synthase from Tropheryma whipplei (strain TW08/27) (Whipple's bacillus).